The primary structure comprises 1058 residues: MIKEITAKYDAEQIEKKVTQFWEDSDAYRKTREHRKSGKRLFFVDGPPYTTGHIHLGTAWNKIIKDSILRYYSMNNRYILERPGWDMHGLPIEVKVEGVLGFKSKKDIESFGVENFIEKCKEFAIKQKQAMTEQFQRLGVWLQWPDPYMTLKDEYIEAAWWTLKQASEKDLLEVGKRSVNWCPRCETAIADSEVEYSERTDPSIYVKFRVKGEENTFIVIWTTTPWTIPANVAVAVHPAYEYSKFRAIRQDGSEEILIAATELIKNVLKQGRYTDFEVLETMLGEELTKLEYESPVGDLVPVQNEIKHGVYLADFVTVENTGCVHIAPGHGMDDFNLGAKHKLPILCPVGSNGSYTEEAGEYAGKNVKEANPIVIEDLKARNRLLAEGTVTHRYGHCWRCKTPIIYLATEQWFLKVTEIKEKMLEEIDAVDWYPDWAGSARFRTWVEGARDWCISRQRYWGIPIPVWKCKKCGKLEVIGTKAELLEKAGLNGDIELHRPYVDRVTVPCECGGEKKRVEDVFDVWFDSAVASWATLKFPQTRDQFDEWWPADFITEGHDQTRGWFYSQLGASMVGFGRAPYKSVLMHGFTLDAGGKKMSKSLGNVISPLDIIGRFGADTLRAYVLSSSAPWDDLKFNLEEVETIHRSINILWNVFRFPLPYMALDNFDPMQVSLDSVRDALREEDRWILSRAQSVVKSVDEAMSGYLLHKAVREILDFTLEDLSRWYIQLIRPRTWTEADDPDKLAAYCVLYEVYVTITKLISPFMPYLAEEMYQNLIRNVDPKAPESVHMCDWPKVNEAYLDTKLEEAMNTARSIVEAASNARQKAGRKLRWPISRIVVSPESEDAARAVERLRSVLMDQTNSKDIVLTGVGKSWDELGLEVIPDPGKIGPVFKRDAGKVVPALQKVDGFALKKAFAEAGEFELTLADGSTVKVTPEMANFKETLPEGTASAESDAGPVYVDANLTPELEAEGYAREVIRRLQDMRKELDLVVDENIQVSVRIEDERVLKLVETLKGLIAEEVRADVFDIGSGVNVSGDLVKDWDVEGIAMKMGIAKK.

The short motif at Pro-48–Thr-58 is the 'HIGH' region element. The 'KMSKS' region signature appears at Lys-596–Ser-600. Position 599 (Lys-599) interacts with ATP.

The protein belongs to the class-I aminoacyl-tRNA synthetase family. IleS type 2 subfamily. As to quaternary structure, monomer. It depends on Zn(2+) as a cofactor.

The protein resides in the cytoplasm. The catalysed reaction is tRNA(Ile) + L-isoleucine + ATP = L-isoleucyl-tRNA(Ile) + AMP + diphosphate. Its function is as follows. Catalyzes the attachment of isoleucine to tRNA(Ile). As IleRS can inadvertently accommodate and process structurally similar amino acids such as valine, to avoid such errors it has two additional distinct tRNA(Ile)-dependent editing activities. One activity is designated as 'pretransfer' editing and involves the hydrolysis of activated Val-AMP. The other activity is designated 'posttransfer' editing and involves deacylation of mischarged Val-tRNA(Ile). In Methanosarcina mazei (strain ATCC BAA-159 / DSM 3647 / Goe1 / Go1 / JCM 11833 / OCM 88) (Methanosarcina frisia), this protein is Isoleucine--tRNA ligase.